The primary structure comprises 370 residues: Formate dehydrogenase (370 aa).

Substrate-binding residues include I94 and N120. Residues 175–176 (RI), D196, 231–235 (PLHES), T257, D283, and 312–315 (HMSG) contribute to the NAD(+) site.

This sequence belongs to the D-isomer specific 2-hydroxyacid dehydrogenase family. FDH subfamily. In terms of assembly, homodimer.

It is found in the cytoplasm. The catalysed reaction is formate + NAD(+) = CO2 + NADH. In terms of biological role, catalyzes the NAD(+)-dependent oxidation of formate to carbon dioxide. Formate oxidation is the final step in the methanol oxidation pathway in methylotrophic microorganisms. Has a role in the detoxification of exogenous formate in non-methylotrophic organisms. In Chaetomium thermophilum (strain DSM 1495 / CBS 144.50 / IMI 039719) (Thermochaetoides thermophila), this protein is Formate dehydrogenase.